Here is a 100-residue protein sequence, read N- to C-terminus: NADH-quinone oxidoreductase subunit K 2 (100 aa).

3 helical membrane-spanning segments follow: residues 2–22 (LAIE…TIGV), 29–49 (IVIF…FIAF), and 61–81 (FVFF…ALMI).

The protein belongs to the complex I subunit 4L family. NDH-1 is composed of 14 different subunits. Subunits NuoA, H, J, K, L, M, N constitute the membrane sector of the complex.

It is found in the cell inner membrane. The catalysed reaction is a quinone + NADH + 5 H(+)(in) = a quinol + NAD(+) + 4 H(+)(out). Its function is as follows. NDH-1 shuttles electrons from NADH, via FMN and iron-sulfur (Fe-S) centers, to quinones in the respiratory chain. The immediate electron acceptor for the enzyme in this species is believed to be ubiquinone. Couples the redox reaction to proton translocation (for every two electrons transferred, four hydrogen ions are translocated across the cytoplasmic membrane), and thus conserves the redox energy in a proton gradient. In Geobacter sp. (strain M21), this protein is NADH-quinone oxidoreductase subunit K 2.